The following is a 270-amino-acid chain: F-actin-capping protein subunit beta (270 aa).

This sequence belongs to the F-actin-capping protein beta subunit family. As to quaternary structure, component of the F-actin capping complex, composed of a heterodimer of an alpha and a beta subunit.

Its subcellular location is the cytoplasm. The protein localises to the cytoskeleton. Functionally, F-actin-capping proteins bind in a Ca(2+)-independent manner to the fast growing ends of actin filaments (barbed end) thereby blocking the exchange of subunits at these ends. Unlike other capping proteins (such as gelsolin and severin), these proteins do not sever actin filaments. The polypeptide is F-actin-capping protein subunit beta (cap-2) (Caenorhabditis elegans).